A 648-amino-acid polypeptide reads, in one-letter code: Macrolide export ATP-binding/permease protein MacB (648 aa).

The ABC transporter domain occupies Leu5–Thr243. An ATP-binding site is contributed by Gly41–Ser48. The next 4 helical transmembrane spans lie at Leu273–Gly293, Leu523–Ile543, Ala576–Phe596, and Pro611–Leu631.

This sequence belongs to the ABC transporter superfamily. Macrolide exporter (TC 3.A.1.122) family. Homodimer. Part of the tripartite efflux system MacAB-TolC, which is composed of an inner membrane transporter, MacB, a periplasmic membrane fusion protein, MacA, and an outer membrane component, TolC. The complex forms a large protein conduit and can translocate molecules across both the inner and outer membranes. Interacts with MacA.

Its subcellular location is the cell inner membrane. In terms of biological role, part of the tripartite efflux system MacAB-TolC. MacB is a non-canonical ABC transporter that contains transmembrane domains (TMD), which form a pore in the inner membrane, and an ATP-binding domain (NBD), which is responsible for energy generation. Confers resistance against macrolides. In Escherichia coli (strain UTI89 / UPEC), this protein is Macrolide export ATP-binding/permease protein MacB.